The sequence spans 384 residues: Dual-specificity RNA methyltransferase RlmN (384 aa).

The active-site Proton acceptor is the Glu105. Positions 111-350 (EVDRATLCVS…TIVRKTRGDD (240 aa)) constitute a Radical SAM core domain. The cysteines at positions 118 and 355 are disulfide-linked. Positions 125, 129, and 132 each coordinate [4Fe-4S] cluster. Residues 179–180 (GE), Ser211, 233–235 (SLH), and Asn312 contribute to the S-adenosyl-L-methionine site. Cys355 serves as the catalytic S-methylcysteine intermediate.

It belongs to the radical SAM superfamily. RlmN family. [4Fe-4S] cluster is required as a cofactor.

It is found in the cytoplasm. The enzyme catalyses adenosine(2503) in 23S rRNA + 2 reduced [2Fe-2S]-[ferredoxin] + 2 S-adenosyl-L-methionine = 2-methyladenosine(2503) in 23S rRNA + 5'-deoxyadenosine + L-methionine + 2 oxidized [2Fe-2S]-[ferredoxin] + S-adenosyl-L-homocysteine. It catalyses the reaction adenosine(37) in tRNA + 2 reduced [2Fe-2S]-[ferredoxin] + 2 S-adenosyl-L-methionine = 2-methyladenosine(37) in tRNA + 5'-deoxyadenosine + L-methionine + 2 oxidized [2Fe-2S]-[ferredoxin] + S-adenosyl-L-homocysteine. Its function is as follows. Specifically methylates position 2 of adenine 2503 in 23S rRNA and position 2 of adenine 37 in tRNAs. m2A2503 modification seems to play a crucial role in the proofreading step occurring at the peptidyl transferase center and thus would serve to optimize ribosomal fidelity. The protein is Dual-specificity RNA methyltransferase RlmN of Escherichia coli O9:H4 (strain HS).